The following is a 528-amino-acid chain: Biotin carboxylase 1, chloroplastic (528 aa).

A chloroplast-targeting transit peptide spans 1–51; the sequence is MEATLPVCKSVTSTPGLFMGKTSGIRSSQCSFMMGNKVNFPRQRAQTAHVH. ATP is bound by residues lysine 179, lysine 221, 227–228, 263–266, and histidine 271; these read GG and EKYV. Residues 183–380 form the ATP-grasp domain; the sequence is RETMKKAGVP…LIEEQIRVAM (198 aa). Lysine 300 provides a ligand contact to hydrogencarbonate. ATP contacts are provided by glutamate 338 and glutamate 351. Mg(2+) contacts are provided by glutamate 338, glutamate 351, and asparagine 353. Mn(2+) contacts are provided by glutamate 338, glutamate 351, and asparagine 353. 3 residues coordinate hydrogencarbonate: arginine 355, valine 358, and arginine 401. The active site involves arginine 355. Arginine 401 provides a ligand contact to biotin.

In terms of assembly, acetyl-CoA carboxylase is a heterohexamer composed of biotin carboxyl carrier protein, biotin carboxylase and two subunits each of ACCase subunit alpha and ACCase plastid-coded subunit beta (accD). Requires Mg(2+) as cofactor. Mn(2+) serves as cofactor.

It is found in the plastid. Its subcellular location is the chloroplast. It catalyses the reaction N(6)-biotinyl-L-lysyl-[protein] + hydrogencarbonate + ATP = N(6)-carboxybiotinyl-L-lysyl-[protein] + ADP + phosphate + H(+). The protein operates within lipid metabolism; malonyl-CoA biosynthesis; malonyl-CoA from acetyl-CoA: step 1/1. Its function is as follows. This protein is a component of the acetyl coenzyme A carboxylase complex; first, biotin carboxylase catalyzes the carboxylation of the carrier protein and then the transcarboxylase transfers the carboxyl group to form malonyl-CoA. In Populus trichocarpa (Western balsam poplar), this protein is Biotin carboxylase 1, chloroplastic.